A 400-amino-acid polypeptide reads, in one-letter code: LIM/homeobox protein Lhx3 (400 aa).

LIM zinc-binding domains are found at residues 34 to 84 and 93 to 147; these read CAGC…CKDD and CAAC…CKAD. Ser74 carries the post-translational modification Phosphoserine. Positions 160–219 form a DNA-binding region, homeobox; it reads AKRPRTTITAKQLETLKSAYNTSPKPARHVREQLSSETGLDMRVVQVWFQNRRAKEKRLK. 2 disordered regions span residues 215 to 280 and 297 to 400; these read EKRL…SSLG and TLDH…HAQF. Position 230 is a phosphotyrosine (Tyr230). Ser237 and Ser241 each carry phosphoserine. 2 stretches are compositionally biased toward pro residues: residues 319-334 and 352-361; these read GIPPSPAAPQSLPGPQ and SGPPGGPPPM. Over residues 368–380 the composition is skewed to polar residues; the sequence is GPSSDLSTESSSG.

Interacts with POU1F1. At neuronal promoters, interacts with LDB1, in motor neurons LDB1 is displaced by ISL1 and a ternary complex is formed in which ISL1 contacts both LHX3 and LDB1; allosteric structural changes in the DNA binding domain of LHX3, induced by the ISL1-LHX3 interaction, may explain differences in sequence specificity of the different complexes. Interacts with LDB2. May interact with CITED2/MRG1. In terms of tissue distribution, mostly expressed in the pituitary anterior and intermediate lobes. It is also expressed in the pineal gland and transiently in the primordia of motor neurons including the spinal cord, pons and medulla oblongata.

It localises to the nucleus. Transcription factor. Recognizes and binds to the consensus sequence motif 5'-AATTAATTA-3' in the regulatory elements of target genes, such as glycoprotein hormones alpha chain CGA and visual system homeobox CHX10, positively modulating transcription; transcription can be co-activated by LDB2. Synergistically enhances transcription from the prolactin promoter in cooperation with POU1F1/Pit-1. Required for the establishment of the specialized cells of the pituitary gland and the nervous system. Involved in the development of interneurons and motor neurons in cooperation with LDB1 and ISL1. This chain is LIM/homeobox protein Lhx3 (Lhx3), found in Mus musculus (Mouse).